Here is a 379-residue protein sequence, read N- to C-terminus: Cobalt-precorrin-5B C(1)-methyltransferase (379 aa).

Belongs to the CbiD family.

It carries out the reaction Co-precorrin-5B + S-adenosyl-L-methionine = Co-precorrin-6A + S-adenosyl-L-homocysteine. The protein operates within cofactor biosynthesis; adenosylcobalamin biosynthesis; cob(II)yrinate a,c-diamide from sirohydrochlorin (anaerobic route): step 6/10. In terms of biological role, catalyzes the methylation of C-1 in cobalt-precorrin-5B to form cobalt-precorrin-6A. This chain is Cobalt-precorrin-5B C(1)-methyltransferase, found in Salmonella paratyphi A (strain ATCC 9150 / SARB42).